Here is a 3057-residue protein sequence, read N- to C-terminus: MSLALNDLLICCRQLEHDRATERRKAVENFRHLIQDPETVQHLDQHSDSKQGKYLNWDAAFRFLQKYIQKETECLRTAKQNVSASTQATRQKKMQEISSLVKYFIKCANKRAPRLKCQELLNYIMDTVRDSSNNPIYGADYSNILLKDILSVRKYWCEISQQQWRELFLIYFTLYLKPSQDINRLLVARIIQAVTKGCCSQTDGLNSEFLDFFTKAIQNARQEKSSPGLNHILAAYVIFLKTLAANFRIRVCELGDKILPTLLYIWTQHRLNDSLKEVIVELFQLQVYMHHPKGAKTQEKGAYESAKWKSILYNLYDLLVNEISRIGSRGKYSSGSRNIAVKENLIELMADICHQVFNEDTRSLEISQSYTTTQREFSDYNAPCKKRKIELGWGVIKDHLQKSQNDFDVVPWLQIATQLISKYPASLPNCELSPLLMILYQLLPQQRRGERTPYVLRCLMEVALCQGKKPNLESSHKSDLLKIWIKIWSITFRGISSEQIQAENFGLLGAIIQGSLVEVDREFWKLFTGSACKPSCPTVCCLTLALKTCVVPETVETGMENICDGNRKFSLKESIMKWLLFCQLEDDFEDRIELPPILHSNFPHLALEKILVSLIMKNCKAAMNFFQSVPECEQHQKDTEEPSLLEVEELFLQTTFDKMDFLTVVQECTIEKHQSSVGFSFHQNLKESLDRYLLGLSEQLLNNYLPETSDSETLVRCSSLLVGVLGCYCYVGVIAEEEAYTSELFQKAKSLMQCAGESITLFKSKTNEESRIISLRNMMHLCTNCLYKCAKRSPNKIASGFFLRLLTSKLMHDIADVCRSLAFIIKKPFDCREVESMEDDTDKNLMEMNDQSSMSLFNDNPASSVIDANESGESQITMGAMNPLAEEHLSKQDLLVLDMLRFLCMCITIAQSNTMSFRAADIRRKLLMLIDSDRLDPTKSLHLHMYLVLLKELPGEEYPLPMEDVVELLKPLSSVCSLYRRDQDVCKTILNHVLHIVPNLCRENVDAESTRDAQGQFLTVIGAFWHLTKEGKCTFSVRLALVKCLKTLLEADPYSRWAILNVMEKDFPVNEVFPQFLADNHHQVCMLAAGLINRLFQHMKQGDSSTIMRALPLKLQQTAFENAYLKAQERIRQVKSQGGENRELLDEICNRKAVLLTMIAVVLCCSPVCEKQALFALCKSVKENGLEPHLIKKVLEKVSETFGYRHLEDFMASHLDYLVLEWLHLQDAEYSLSSFPFILLNYTNIEDFYRSCYKVLIPHLVMRCHFDEVKSIANQIQGDWKSLLTDCFPKILVNILPYFAYEDTGDRGMAQQRETASKVYDMLKDENLLGKQIDQLFINNLPEIVVELLMTLHEPATSDASQSTDPCDFSGDLDPRPNPPHFPSHVIKATFAYISNCHKTKLKSILEVLSKSPDSYQKILLAICEQAAETNNVYKKHRILKIYHLFVSLLLKDMKSGLGGAWAFVLRDVIYTLIHYINKRPSRFMDVSLRSFSLCCDLLSRVCHTAVTYSKDALESHLHVIVGTLIPLVDGQMEVQKQVLDLLKYLVIDNKDNENLYVMIKLLDPFPDNAVFKDLRITQQEIKYSKGPFSLLEEINHFLSVSVYDALPLTRLEGLKDLRRQLAQHKDQMMDLMRASQDNPQDGIVVKLVVSLLQLSKMAVNHTGEREVLEAVGRCLGEVGPIDFSTIAIQHSKDMPYTKALELFEDKEHHWTLMMLTYLNSTLVEDCVKVRSAAVTCLKSILATKTGHGFWEIFKTTADPMLTYLLPFRTSRKKFLEVPRLNKESPLEGLDDISLWIPQSENHDIWIKTLTCALLDSGGINSEVLQLLKPMCEVKTDFCQTVLPYLIHDILLQDTNESWRSLLSTHIQGFFTNCFRHSSQTSRSTTPANMDSESEHVFRCHLDKKSQRTMLAVVDYMRRQKRSSSGTVFDDAFWLELNYLEVAKVAQSCAAHFTALLYAEIYADKKNMDDQEKRSPTFEEGSQSTTISSLSEKSKEETGISLQDLLLEIYRSIGEPDSLYGCGGGKMLQPLTRLRTYEHEAMWGKALVTYDLETAISSSTRQAGIIQALQNLGLCHILSVYLKGLDHENKEQCAELQELHYQVAWRNMQWDSCVSVNKGMEGTSYHESLYNALQSLRDREFSTFYESLKYARVKEVEELCKGSLESVYSLYPTLSRLQAIGELENIGELFSRSVTDRQPSEVYNKWWKHSQLLKDSDFSFQEPIMALRTVILEILMEKEMENSQRECLKDILTKHLVELSLLARTFQNTQLPERAIFQIKQYNSANCGVSEWQLEEAQVFWAKKEQSLALSILKQMIKKLDASCTENDPRLKLIHIECLRVCGTWLAETCLENPAVIMQTYLEKAVELAGNYDGESNDELRNGKMKAFLSLARFSDTQYQRIENYMKSSEFENKQALLKRAKEEVGLLREHKIQTNRYTIKVQRELELDEGALRALKKDRKRFLCKAVENYINCLLSGEGHDMWIFRLCSLWLENSGVSEVNGMMKRDGMKIPSYKFLPLMYQLAARMGTKMMGGLGFHDVLNSLISRISVDHPHHTLFIILALANANKDEFLTKPEAARSSRITKNTPKESSQLDEDRTEAANKVICTLRNRRRQMVRSVEALCDAYIILANLDATQWRTQRKGIRIPADQPITKLKNLEDVVVPTMEIKVDPTGEYGNMVTIQSFKPEFRLAGGLNLPKIIDCVGSDGKERRQLVKGRDDLRQDAVMQQVFQMCNTLLQRNTETRKRKLTICTYKVVPLSQRSGVLEWCTGTVPIGEYLVNNDTGAHKRYRPKDFSPVQCQKKMMEAQNKSFEEKYEIFMNICQNFQPVFRYFCMEKFLDPAVWFERRLAYTQSVATSSIVGYILGLGDRHVQNILINEQSAELVHIDLGVAFEQGKILPTPETVPFRLTRDIVDGMGITGVEGVFRRCCEKTMEVMRNSQETLLTIVEVLLYDPLFDWTMNPLKALYLQQRPEDESELHSTPRADDQECKRNLSDTDQSFNKVAERVLMRLQEKLKGVEEGTVLSVGGQVNFLIQQAMDPKNLSKLFSGWKAWV.

S2 is subject to N-acetylserine. S367 bears the Phosphoserine mark. The interval 1374-1383 (DPRPNPPHFP) is interaction with ABL1. S1894 is modified (phosphoserine). The region spanning 1941–2567 (EVAKVAQSCA…LFIILALANA (627 aa)) is the FAT domain. 2 disordered regions span residues 1970-1995 (DQEK…EKSK) and 2578-2598 (AARS…LDED). 2 stretches are compositionally biased toward polar residues: residues 1980 to 1991 (EGSQSTTISSLS) and 2582 to 2592 (SRITKNTPKES). A Phosphoserine; by autocatalysis modification is found at S1982. Position 1984 is a phosphoserine (S1984). One can recognise a PI3K/PI4K catalytic domain in the interval 2687–2999 (FKPEFRLAGG…QECKRNLSDT (313 aa)). Positions 2693–2699 (LAGGLNL) are G-loop. Positions 2868-2876 (GLGDRHVQN) are catalytic loop. Residues 2888 to 2912 (HIDLGVAFEQGKILPTPETVPFRLT) form an activation loop region. Basic and acidic residues predominate over residues 2977–2997 (DESELHSTPRADDQECKRNLS). A disordered region spans residues 2977 to 2998 (DESELHSTPRADDQECKRNLSD). A Phosphoserine modification is found at S2997. K3017 carries the N6-acetyllysine modification. The FATC domain occupies 3025–3057 (TVLSVGGQVNFLIQQAMDPKNLSKLFSGWKAWV). A Microbody targeting signal; atypical motif is present at residues 3047 to 3049 (SKL).

It belongs to the PI3/PI4-kinase family. ATM subfamily. Homodimer. Dimers or tetramers in inactive state. On DNA damage, autophosphorylation dissociates ATM into monomers rendering them catalytically active. Binds p53/TP53, ABL1, BRCA1 and TERF1. Interacts with NBN (via FxF/Y motif). Part of the BRCA1-associated genome surveillance complex (BASC), which contains BRCA1, MSH2, MSH6, MLH1, ATM, BLM, PMS2 and the RAD50-MRE11-NBN protein complex. This association could be a dynamic process changing throughout the cell cycle and within subnuclear domains. Interacts with RAD17; DNA damage promotes the association. Interacts with EEF1E1; the interaction, induced on DNA damage, up-regulates TP53. Interacts with KAT8, NABP2, ATMIN and CEP164. Interacts with AP2B1 and AP3B2; the interaction occurs in cytoplasmic vesicles. Interacts with TELO2 and TTI1. Interacts with DDX1. Interacts with BRAT1. Interacts with CYREN (via XLF motif). Interacts (via microbody targeting signal) with PEX5; promoting translocation to peroxisomes in response to reactive oxygen species (ROS). Post-translationally, phosphorylated by NUAK1/ARK5. Autophosphorylation on Ser-367, Ser-1894, Ser-1982 correlates with DNA damage-mediated activation of the kinase. During the late stages of DNA damage response, dephosphorylated following deacetylation by SIRT7, leading to ATM deactivation. In terms of processing, acetylation, on DNA damage, is required for activation of the kinase activity, dimer-monomer transition, and subsequent autophosphorylation on Ser-1982. Acetylated in vitro by KAT5/TIP60. Deacetylated by SIRT7 during the late stages of DNA damage response, promoting ATM dephosphorylation and subsequent deactivation.

Its subcellular location is the nucleus. It is found in the cytoplasmic vesicle. The protein localises to the cytoplasm. The protein resides in the cytoskeleton. It localises to the microtubule organizing center. Its subcellular location is the centrosome. It is found in the peroxisome matrix. It carries out the reaction L-seryl-[protein] + ATP = O-phospho-L-seryl-[protein] + ADP + H(+). It catalyses the reaction L-threonyl-[protein] + ATP = O-phospho-L-threonyl-[protein] + ADP + H(+). Activated by the MRN (MRE11-RAD50-NBS1) complex in response to DNA double strand breaks (DSBs), which recruits ATM to DSBs and promotes its activation. Inhibited by wortmannin. Its function is as follows. Serine/threonine protein kinase which activates checkpoint signaling upon double strand breaks (DSBs), apoptosis and genotoxic stresses such as ionizing ultraviolet A light (UVA), thereby acting as a DNA damage sensor. Recognizes the substrate consensus sequence [ST]-Q. Phosphorylates 'Ser-139' of histone variant H2AX at double strand breaks (DSBs), thereby regulating DNA damage response mechanism. Also plays a role in pre-B cell allelic exclusion, a process leading to expression of a single immunoglobulin heavy chain allele to enforce clonality and monospecific recognition by the B-cell antigen receptor (BCR) expressed on individual B-lymphocytes. After the introduction of DNA breaks by the RAG complex on one immunoglobulin allele, acts by mediating a repositioning of the second allele to pericentromeric heterochromatin, preventing accessibility to the RAG complex and recombination of the second allele. Also involved in signal transduction and cell cycle control. May function as a tumor suppressor. Necessary for activation of ABL1 and SAPK. Phosphorylates DYRK2, CHEK2, p53/TP53, FBXW7, FANCD2, NFKBIA, BRCA1, CREBBP/CBP, RBBP8/CTIP, FBXO46, MRE11, nibrin (NBN), RAD50, RAD17, PELI1, TERF1, UFL1, RAD9, UBQLN4 and DCLRE1C. May play a role in vesicle and/or protein transport. Could play a role in T-cell development, gonad and neurological function. Binds DNA ends. Plays a role in replication-dependent histone mRNA degradation. Phosphorylation of DYRK2 in nucleus in response to genotoxic stress prevents its MDM2-mediated ubiquitination and subsequent proteasome degradation. Phosphorylates ATF2 which stimulates its function in DNA damage response. Phosphorylates ERCC6 which is essential for its chromatin remodeling activity at DNA double-strand breaks. Phosphorylates TTC5/STRAP at 'Ser-203' in the cytoplasm in response to DNA damage, which promotes TTC5/STRAP nuclear localization. Also involved in pexophagy by mediating phosphorylation of PEX5: translocated to peroxisomes in response to reactive oxygen species (ROS), and catalyzes phosphorylation of PEX5, promoting PEX5 ubiquitination and induction of pexophagy. This chain is Serine-protein kinase ATM (ATM), found in Sus scrofa (Pig).